We begin with the raw amino-acid sequence, 502 residues long: L-arabinose isomerase (502 aa).

Mn(2+)-binding residues include Glu306, Glu333, His350, and His449.

Belongs to the arabinose isomerase family. Mn(2+) serves as cofactor.

The enzyme catalyses beta-L-arabinopyranose = L-ribulose. Its pathway is carbohydrate degradation; L-arabinose degradation via L-ribulose; D-xylulose 5-phosphate from L-arabinose (bacterial route): step 1/3. Functionally, catalyzes the conversion of L-arabinose to L-ribulose. This Flavobacterium johnsoniae (strain ATCC 17061 / DSM 2064 / JCM 8514 / BCRC 14874 / CCUG 350202 / NBRC 14942 / NCIMB 11054 / UW101) (Cytophaga johnsonae) protein is L-arabinose isomerase.